Reading from the N-terminus, the 289-residue chain is ATP synthase gamma chain (289 aa).

This sequence belongs to the ATPase gamma chain family. As to quaternary structure, F-type ATPases have 2 components, CF(1) - the catalytic core - and CF(0) - the membrane proton channel. CF(1) has five subunits: alpha(3), beta(3), gamma(1), delta(1), epsilon(1). CF(0) has three main subunits: a, b and c.

The protein localises to the cell inner membrane. Its function is as follows. Produces ATP from ADP in the presence of a proton gradient across the membrane. The gamma chain is believed to be important in regulating ATPase activity and the flow of protons through the CF(0) complex. This is ATP synthase gamma chain from Actinobacillus succinogenes (strain ATCC 55618 / DSM 22257 / CCUG 43843 / 130Z).